Consider the following 163-residue polypeptide: Large ribosomal subunit protein uL10 (163 aa).

The protein belongs to the universal ribosomal protein uL10 family. Part of the ribosomal stalk of the 50S ribosomal subunit. The N-terminus interacts with L11 and the large rRNA to form the base of the stalk. The C-terminus forms an elongated spine to which L12 dimers bind in a sequential fashion forming a multimeric L10(L12)X complex.

In terms of biological role, forms part of the ribosomal stalk, playing a central role in the interaction of the ribosome with GTP-bound translation factors. The sequence is that of Large ribosomal subunit protein uL10 from Haemophilus influenzae (strain PittEE).